Consider the following 73-residue polypeptide: Acyl carrier protein (73 aa).

Positions 1-73 (MAVFEKVQDI…DLVKYVENNK (73 aa)) constitute a Carrier domain. Residue Ser35 is modified to O-(pantetheine 4'-phosphoryl)serine.

This sequence belongs to the acyl carrier protein (ACP) family. In terms of processing, 4'-phosphopantetheine is transferred from CoA to a specific serine of apo-ACP by AcpS. This modification is essential for activity because fatty acids are bound in thioester linkage to the sulfhydryl of the prosthetic group.

The protein localises to the cytoplasm. It functions in the pathway lipid metabolism; fatty acid biosynthesis. Its function is as follows. Carrier of the growing fatty acid chain in fatty acid biosynthesis. In Lactococcus lactis subsp. lactis (strain IL1403) (Streptococcus lactis), this protein is Acyl carrier protein.